The primary structure comprises 1132 residues: Protein sel-1 homolog 3 (1132 aa).

The tract at residues 1–24 (MQRRGAGLGWPRQQQQQPPPLAVG) is disordered. 3 N-linked (GlcNAc...) asparagine glycosylation sites follow: N201, N382, and N527. 7 Sel1-like repeats span residues 575–609 (YLAV…RLSS), 611–647 (NLGY…DQHT), 694–730 (RLAQ…PALI), 732–767 (DYAI…QAVN), 768–800 (GLGW…DASY), 801–839 (NLGV…EGTL), and 840–877 (WCSL…LGHV). At S608 the chain carries Phosphoserine. N937 carries an N-linked (GlcNAc...) asparagine glycan. Residues 952-988 (KMGDLYYYGHQNQSQDLELSVQMYAQAALDGDSQGFF) form a Sel1-like 8 repeat. The helical transmembrane segment at 1057-1077 (ILHSALIYFLGTFLLSILIAW) threads the bilayer. Residues 1087-1132 (ASDPPPRPSQASPDTATSTASPAVTPAADASDQDQPTVTNNPEPRG) are disordered. Positions 1097–1116 (ASPDTATSTASPAVTPAADA) are enriched in low complexity. Over residues 1119–1132 (QDQPTVTNNPEPRG) the composition is skewed to polar residues.

The protein localises to the membrane. This Homo sapiens (Human) protein is Protein sel-1 homolog 3 (SEL1L3).